The sequence spans 112 residues: M-myrmeciitoxin-Mp1 (112 aa).

An N-terminal signal peptide occupies residues 1–26 (MKLSCLLLTLTIIFVLTIVHAPNVEA). The propeptide occupies 27 to 56 (KDLADPESEAVGFADAFGEADAVGEADPNA). The tract at residues 57–78 (GLGSVFGRLARILGRVIPKVAK) is critical for cytotoxic activity. Positions 93 to 106 (KEAIPMAVEMAKSQ) are igE-binding determinant.

Belongs to the formicidae venom precursor-01 superfamily. Ant pilosulin family. As to expression, expressed by the venom gland.

The protein localises to the secreted. In terms of biological role, has strong cytotoxic and hemolytic activities. Is more potent against mononuclear leukocytes than against granulocytes. The synthesized peptide 57-76 shows a potent and broad spectrum antimicrobial activity against both Gram-positive and Gram-negative bacteria, and also against the fungus C.albicans. Adopts an alpha-helical structure. The polypeptide is M-myrmeciitoxin-Mp1 (Myrmecia pilosula (Jack jumper ant)).